Reading from the N-terminus, the 493-residue chain is Guanosine-5'-triphosphate,3'-diphosphate pyrophosphatase (493 aa).

It belongs to the GppA/Ppx family. GppA subfamily.

It carries out the reaction guanosine 3'-diphosphate 5'-triphosphate + H2O = guanosine 3',5'-bis(diphosphate) + phosphate + H(+). It participates in purine metabolism; ppGpp biosynthesis; ppGpp from GTP: step 2/2. Its function is as follows. Catalyzes the conversion of pppGpp to ppGpp. Guanosine pentaphosphate (pppGpp) is a cytoplasmic signaling molecule which together with ppGpp controls the 'stringent response', an adaptive process that allows bacteria to respond to amino acid starvation, resulting in the coordinated regulation of numerous cellular activities. This chain is Guanosine-5'-triphosphate,3'-diphosphate pyrophosphatase, found in Salmonella paratyphi A (strain ATCC 9150 / SARB42).